Reading from the N-terminus, the 97-residue chain is UPF0390 protein CNBD1430 (97 aa).

Disordered regions lie at residues 1-57 and 75-97; these read MAQG…INNS and RNVG…GKSR. Over residues 29-46 the composition is skewed to basic and acidic residues; the sequence is GKREVAPKDRQRVLERSQ. Over residues 48 to 57 the composition is skewed to polar residues; the sequence is KQLSSKINNS.

This sequence belongs to the UPF0390 family.

This is UPF0390 protein CNBD1430 from Cryptococcus neoformans var. neoformans serotype D (strain B-3501A) (Filobasidiella neoformans).